The sequence spans 377 residues: Fructose-bisphosphate aldolase 1, chloroplastic (377 aa).

Positions 74 and 164 each coordinate substrate. The active-site Proton acceptor is the Glu204. Lys246 acts as the Schiff-base intermediate with dihydroxyacetone-P in catalysis.

This sequence belongs to the class I fructose-bisphosphate aldolase family.

It localises to the plastid. Its subcellular location is the chloroplast. The enzyme catalyses beta-D-fructose 1,6-bisphosphate = D-glyceraldehyde 3-phosphate + dihydroxyacetone phosphate. Its pathway is carbohydrate degradation; glycolysis; D-glyceraldehyde 3-phosphate and glycerone phosphate from D-glucose: step 4/4. The protein is Fructose-bisphosphate aldolase 1, chloroplastic (ALDCHL) of Chlamydomonas reinhardtii (Chlamydomonas smithii).